We begin with the raw amino-acid sequence, 325 residues long: Glycerol-3-phosphate dehydrogenase [NAD(P)+] (325 aa).

The NADPH site is built by Trp15, Arg35, and Lys107. Positions 107, 135, and 137 each coordinate sn-glycerol 3-phosphate. Ala139 serves as a coordination point for NADPH. 5 residues coordinate sn-glycerol 3-phosphate: Lys190, Asp243, Ser253, Arg254, and Asn255. Residue Lys190 is the Proton acceptor of the active site. An NADPH-binding site is contributed by Arg254. Leu272 and Glu274 together coordinate NADPH.

It belongs to the NAD-dependent glycerol-3-phosphate dehydrogenase family.

The protein localises to the cytoplasm. The enzyme catalyses sn-glycerol 3-phosphate + NAD(+) = dihydroxyacetone phosphate + NADH + H(+). The catalysed reaction is sn-glycerol 3-phosphate + NADP(+) = dihydroxyacetone phosphate + NADPH + H(+). It participates in membrane lipid metabolism; glycerophospholipid metabolism. In terms of biological role, catalyzes the reduction of the glycolytic intermediate dihydroxyacetone phosphate (DHAP) to sn-glycerol 3-phosphate (G3P), the key precursor for phospholipid synthesis. The polypeptide is Glycerol-3-phosphate dehydrogenase [NAD(P)+] (Afipia carboxidovorans (strain ATCC 49405 / DSM 1227 / KCTC 32145 / OM5) (Oligotropha carboxidovorans)).